We begin with the raw amino-acid sequence, 119 residues long: Small ribosomal subunit protein uS13 (119 aa).

Positions 92-119 are disordered; it reads RRGLPVRGQQTQTNARTRKGPRRGPASR.

It belongs to the universal ribosomal protein uS13 family. Part of the 30S ribosomal subunit. Forms a loose heterodimer with protein S19. Forms two bridges to the 50S subunit in the 70S ribosome.

Located at the top of the head of the 30S subunit, it contacts several helices of the 16S rRNA. In the 70S ribosome it contacts the 23S rRNA (bridge B1a) and protein L5 of the 50S subunit (bridge B1b), connecting the 2 subunits; these bridges are implicated in subunit movement. Contacts the tRNAs in the A and P-sites. In Halorhodospira halophila (strain DSM 244 / SL1) (Ectothiorhodospira halophila (strain DSM 244 / SL1)), this protein is Small ribosomal subunit protein uS13.